A 290-amino-acid polypeptide reads, in one-letter code: Ribosome-inactivating protein bryodin I (290 aa).

A signal peptide spans 1–23 (MIKLLVLWLLILTIFLKSPTVEG). Active-site residues include Glu-183 and Glu-212. N-linked (GlcNAc...) asparagine glycans are attached at residues Asn-214 and Asn-250. The propeptide at 271-290 (AIGEDISMTLIGFEHGLYGI) is removed in mature form.

The protein belongs to the ribosome-inactivating protein family. Type 1 RIP subfamily. In terms of processing, appears to undergo proteolytic cleavage in the C-terminal to produce a shorter protein.

The catalysed reaction is Endohydrolysis of the N-glycosidic bond at one specific adenosine on the 28S rRNA.. Functionally, ribosome-inactivating protein of type 1, inhibits protein synthesis in animal cells. This chain is Ribosome-inactivating protein bryodin I, found in Bryonia dioica (Red bryony).